The primary structure comprises 253 residues: Small ribosomal subunit protein uS2 (253 aa).

At S2 the chain carries N-acetylserine. The segment at 212–253 is disordered; the sequence is QQAAEEAAAGEEDDEAKEEVAAEEQTEAADWAEGQSEEVASW. A compositionally biased stretch (acidic residues) spans 219–238; sequence AAGEEDDEAKEEVAAEEQTE.

Belongs to the universal ribosomal protein uS2 family. Component of the small ribosomal subunit. Mature ribosomes consist of a small (40S) and a large (60S) subunit. The 40S subunit contains about 33 different proteins and 1 molecule of RNA (18S). The 60S subunit contains about 49 different proteins and 3 molecules of RNA (25S, 5.8S and 5S). Interacts with RPS21.

The protein resides in the cytoplasm. Functionally, required for the assembly and/or stability of the 40S ribosomal subunit. Required for the processing of the 20S rRNA-precursor to mature 18S rRNA in a late step of the maturation of 40S ribosomal subunits. In Eremothecium gossypii (strain ATCC 10895 / CBS 109.51 / FGSC 9923 / NRRL Y-1056) (Yeast), this protein is Small ribosomal subunit protein uS2.